A 72-amino-acid chain; its full sequence is Translation initiation factor IF-1 (72 aa).

The region spanning 1 to 72 (MAKDDVIEVE…TRGRITYRYK (72 aa)) is the S1-like domain. Tyr-60 is modified (phosphotyrosine).

This sequence belongs to the IF-1 family. In terms of assembly, component of the 30S ribosomal translation pre-initiation complex which assembles on the 30S ribosome in the order IF-2 and IF-3, IF-1 and N-formylmethionyl-tRNA(fMet); mRNA recruitment can occur at any time during PIC assembly.

It localises to the cytoplasm. In terms of biological role, one of the essential components for the initiation of protein synthesis. Stabilizes the binding of IF-2 and IF-3 on the 30S subunit to which N-formylmethionyl-tRNA(fMet) subsequently binds. Helps modulate mRNA selection, yielding the 30S pre-initiation complex (PIC). Upon addition of the 50S ribosomal subunit IF-1, IF-2 and IF-3 are released leaving the mature 70S translation initiation complex. The protein is Translation initiation factor IF-1 of Bacillus pumilus (strain SAFR-032).